An 817-amino-acid chain; its full sequence is Protein EFR3 homolog B (817 aa).

Ser212, Ser214, and Ser216 each carry phosphoserine.

This sequence belongs to the EFR3 family. In terms of assembly, component of a phosphatidylinositol 4-kinase (PI4K) complex, composed of PI4KA, EFR3 (EFR3A or EFR3B), TTC7 (TTC7A or TTC7B) and HYCC (HYCC1 or HYCC2). Palmitoylated at its N-terminus, anchoring the protein to the plasma membrane. In terms of tissue distribution, widely expressed.

Its subcellular location is the cell membrane. It is found in the cytoplasm. It localises to the cytosol. Functionally, component of a complex required to localize phosphatidylinositol 4-kinase (PI4K) to the plasma membrane. The complex acts as a regulator of phosphatidylinositol 4-phosphate (PtdIns(4)P) synthesis. In the complex, EFR3B probably acts as the membrane-anchoring component. Also involved in responsiveness to G-protein-coupled receptors; it is however unclear whether this role is direct or indirect. The polypeptide is Protein EFR3 homolog B (Efr3b) (Mus musculus (Mouse)).